Here is a 521-residue protein sequence, read N- to C-terminus: 56 kDa type-specific antigen (521 aa).

An N-terminal signal peptide occupies residues 1 to 22; sequence MRKIMLIASAMSALSLPFSANA. Residues 64 to 86 traverse the membrane as a helical segment; the sequence is LPLIKGMPFGVTLAAGMTITPGV. The segment at 386–415 is disordered; that stretch reads LGVDQGQEGGCSKDKKQSDTTAEESKKEGK. Positions 396 to 415 are enriched in basic and acidic residues; it reads CSKDKKQSDTTAEESKKEGK. A helical membrane pass occupies residues 469–484; that stretch reads TGMVGSLALGVAANVA.

It localises to the cell membrane. Functionally, may be an adherent factor for rickettsial adsorption to the host-cell surface and a determinant of virulence of individual rickettsial strain. It is the major outer membrane protein. This chain is 56 kDa type-specific antigen, found in Orientia tsutsugamushi (Rickettsia tsutsugamushi).